Reading from the N-terminus, the 109-residue chain is MFGKGGLGNLMKQAQQMQEKMQQMQEEVAKLEVTGESGAGLVKVTINGAHNCRRVEIDPSLMEDDKDMLEDLIAAAINDAARRIDETQKEKMASVSNGMQLPPGFKMPF.

Disordered stretches follow at residues 1–21 (MFGK…QEKM) and 90–109 (EKMA…KMPF). Positions 11–21 (MKQAQQMQEKM) are enriched in low complexity.

The protein belongs to the YbaB/EbfC family. As to quaternary structure, homodimer.

The protein localises to the cytoplasm. It is found in the nucleoid. In terms of biological role, binds to DNA and alters its conformation. May be involved in regulation of gene expression, nucleoid organization and DNA protection. In Serratia proteamaculans (strain 568), this protein is Nucleoid-associated protein Spro_1136.